A 346-amino-acid polypeptide reads, in one-letter code: O-methyltransferase atr3 (346 aa).

Disordered stretches follow at residues 1–22 (MTSV…DDLM) and 52–88 (GLKS…WYHA). Residues 190–191 (DL) and 217–218 (DI) contribute to the S-adenosyl-L-methionine site.

It belongs to the class I-like SAM-binding methyltransferase superfamily. Homodimer.

The enzyme catalyses 4-O-demethylbarbatate + S-adenosyl-L-methionine = proatranorin I + S-adenosyl-L-homocysteine. The protein operates within secondary metabolite biosynthesis; terpenoid biosynthesis. Its function is as follows. O-methyltransferase; part of the gene cluster that mediates the biosynthesis of atranorin, a depside of polyketide origin that accumulates in the cortical or medullary layers of lichen thalli. Atr3 methylates the carboxyl group of 4-O-demethylbarbatic acid to yield proatranorin I. Atr3 is also able to methylate the atr2 product proatranorin III to produce the final compound atranorin. The first step in the pathway is performed by the non-reducing polyketide synthase atr1 that produces 4-O-demethylbarbatic acid composed of two 3-methylorsellinic acid (3MOA) moieties. The pathway continues with the actions of the cytochrome P450 monooygenase atr2 that catalizes the oxidation of c-9 and the O-methyltransferase atr3 that performs the methylation of the carboxyl group to yield atranorin, via the proatranorin II and III intermediates if atr2 acts first, or the proatranorin I intermediate if atr3 acts first. This Stereocaulon alpinum (Alpine snow lichen) protein is O-methyltransferase atr3.